A 499-amino-acid chain; its full sequence is MTASTIKALSAQLAAKEVSAEELARHYLSRIEAGAHLNAFTHVDAEATLAQARAADARIAAGNAAPLTGVPIAHKDVFVTRGWRATAGSKMLGNYVSPFDATVVERLGAAGMVTLGKTNMDEFAMGSSNENSAFGAVKNPWNLEHVPGGSSGGSAAAVAADLAPAATGTDTGGSIRQPASFSGITGIKPTYGRVSRYGMIAFASSLDQGGPMARTAEDCALLLSAMAGFDPRDSTSLEPGRGGDVEDFGRLLGQPLQGADAARPLAGLRIGLPKEYFGEGLADDVRTTVRAALAELEKLGATLVDISLPKTELSIPTYYVIAPAEASSNLSRFDGVRYGHRAAEYRDLADMYRKSRAEGFGWEVKRRILVGAYVLSHGYYDAYYLQAQKIRRIIAQDFQNVLAGANRQCDVIMGPVAPTVAWKLGEKTSDPVQMYLADIFTLSTSLAGLPGMSVPAGFGANGLPVGLQIIGNYFEEARMLQIAHAFQQATDWHHRQPAA.

Residues Lys-75 and Ser-150 each act as charge relay system in the active site. Ser-174 (acyl-ester intermediate) is an active-site residue.

The protein belongs to the amidase family. GatA subfamily. In terms of assembly, heterotrimer of A, B and C subunits.

It carries out the reaction L-glutamyl-tRNA(Gln) + L-glutamine + ATP + H2O = L-glutaminyl-tRNA(Gln) + L-glutamate + ADP + phosphate + H(+). Functionally, allows the formation of correctly charged Gln-tRNA(Gln) through the transamidation of misacylated Glu-tRNA(Gln) in organisms which lack glutaminyl-tRNA synthetase. The reaction takes place in the presence of glutamine and ATP through an activated gamma-phospho-Glu-tRNA(Gln). This chain is Glutamyl-tRNA(Gln) amidotransferase subunit A, found in Ralstonia pickettii (strain 12J).